A 484-amino-acid chain; its full sequence is Transcription factor MYB88 (484 aa).

The interval 1–20 (MEETTKQNNMKKKKKILLHS) is disordered. The Nuclear localization signal signature appears at 13 to 20 (KKKILLHS). 2 HTH myb-type domains span residues 25 to 76 (KKER…YTYL) and 77 to 131 (NSDF…KKRA). 2 consecutive DNA-binding regions (H-T-H motif) follow at residues 53-76 (WAII…YTYL) and 104-127 (WTEI…TTLC). 3 disordered regions span residues 215 to 241 (NATS…DKSN), 321 to 383 (RSSN…GGEL), and 458 to 484 (GVES…LDSL). Over residues 232–241 (KESDGEDKSN) the composition is skewed to basic and acidic residues. Over residues 339–348 (SPASSEYSSG) the composition is skewed to low complexity. Over residues 354–380 (TIMTHPSGDKTQQLMSDTQTTSHQQNG) the composition is skewed to polar residues. Pro residues predominate over residues 463–476 (SPYPSANPSQPPPC).

In terms of assembly, interacts with RBR1. In terms of tissue distribution, expressed at low levels in all organs including roots, leaves, hypocotyls stems, flowers, siliques and buds.

It localises to the nucleus. Its function is as follows. Transcription factor that binds to DNA in promoters cis-regulatory element 5'-GGCGCGC-3' of cell cycle genes, including cyclins, cyclin-dependent kinases (CDKs), and components of the pre-replication complex. Binds to DNA in promoters cis-regulatory element 5'-AGCCG-3' of auxin regulated genes (e.g. PIN3 and PIN7). Together with FAMA and MYB124, ensures that stomata contain just two guard cells (GCs) by enforcing a single symmetric precursor cell division before stomatal maturity. Represses the expression of the mitosis-inducing factors CDKB1-1 and CDKA-1, specifically required for the last guard mother cells (GMC) symmetric divisions in the stomatal pathway. Represses CYCA2-3 in newly formed guard cells. Together with MYB88, regulates stomata spacing by restricting divisions late in the stomatal cell lineage thus limiting the number of GMC divisions. In collaboration with CDKB1-1 and CDKB1-2, restrict the G1/S transition and chloroplast and nuclear number during stomatal formation, and normally maintain fate and developmental progression throughout the stomatal cell lineage. Involved in sensing and/or transducing abiotic stress (e.g. drought and salt), probably via the positive regulation of NAC019. Regulates female reproduction being required for entry into megasporogenesis, probably via the regulation of cell cycle genes. Plays a minor role in lateral roots (LRs) initiation. Involved complementarily in establishing the gravitropic set-point angles of lateral roots by regulating the transcription of PIN3 and PIN7 in gravity-sensing cells of primary and lateral roots. The sequence is that of Transcription factor MYB88 from Arabidopsis thaliana (Mouse-ear cress).